The primary structure comprises 475 residues: MATASQGKVTQVIGAVVDVQFDGGLPPILNALETENNGKRLVLEVAQHLGESTVRTIAMDATEGLVRGARVTDTGSPISVPVGDATLGRILNVIGEPIDEKGDLGEASTRAIHQPAPTFAEQSTTSEILVTGIKVIDLLAPYSKGGKIGLFGGAGVGKTVLIMELINNIAKVHSGYSVFAGVGERTREGNDLYHEMIESGVIKIDNLSESKVALVYGQMNEPPGARARVALTGLTLAEQFRDQSGTDVLFFVDNIFRFTQAGSEVSALLGRIPSAVGYQPTLATDMGALQERITSTKAGSITSVQAIYVPADDLTDPAPATSFAHLDATTVLSRAISELGIYPAVDPLDSTSRILDPQIVGEEHYNVARAVQGILQRYKSLQDIIAILGMDELSEEDKLSVARARKIQRFLSQPFDVAKVFTGSDGVQVPLEKTIASFKAVVNGEYDHLPEAAFYMVGDIEDVIAKAQRLAAQAA.

Residue 152–159 (GGAGVGKT) coordinates ATP.

This sequence belongs to the ATPase alpha/beta chains family. In terms of assembly, F-type ATPases have 2 components, CF(1) - the catalytic core - and CF(0) - the membrane proton channel. CF(1) has five subunits: alpha(3), beta(3), gamma(1), delta(1), epsilon(1). CF(0) has four main subunits: a(1), b(1), b'(1) and c(9-12).

Its subcellular location is the cell inner membrane. It catalyses the reaction ATP + H2O + 4 H(+)(in) = ADP + phosphate + 5 H(+)(out). In terms of biological role, produces ATP from ADP in the presence of a proton gradient across the membrane. The catalytic sites are hosted primarily by the beta subunits. The chain is ATP synthase subunit beta 1 from Cereibacter sphaeroides (strain ATCC 17029 / ATH 2.4.9) (Rhodobacter sphaeroides).